A 238-amino-acid chain; its full sequence is Probable 2-phosphosulfolactate phosphatase (238 aa).

The protein belongs to the ComB family. Mg(2+) is required as a cofactor.

It carries out the reaction (2R)-O-phospho-3-sulfolactate + H2O = (2R)-3-sulfolactate + phosphate. This chain is Probable 2-phosphosulfolactate phosphatase, found in Carboxydothermus hydrogenoformans (strain ATCC BAA-161 / DSM 6008 / Z-2901).